A 768-amino-acid chain; its full sequence is Ribonucleoside-diphosphate reductase large chain (768 aa).

ATP contacts are provided by residues 7-8 (SK) and 13-19 (EKLGIDL). GDP-binding residues include Thr-196 and Ser-211. Cysteines 212 and 437 form a disulfide. Residues 220–222 (DSI), Lys-237, and Arg-250 each bind dTTP. Asn-420 contacts GDP. Catalysis depends on Asn-420, which acts as the Proton acceptor. Cys-422 serves as the catalytic Cysteine radical intermediate. Glu-424 lines the GDP pocket. Catalysis depends on Glu-424, which acts as the Proton acceptor.

It belongs to the ribonucleoside diphosphate reductase large chain family. In terms of assembly, heterodimer of a large and a small subunit.

It carries out the reaction a 2'-deoxyribonucleoside 5'-diphosphate + [thioredoxin]-disulfide + H2O = a ribonucleoside 5'-diphosphate + [thioredoxin]-dithiol. Its activity is regulated as follows. Under complex allosteric control mediated by deoxynucleoside triphosphates and ATP binding to separate specificity and activation sites on the large subunit. The type of nucleotide bound at the specificity site determines substrate preference. It seems probable that ATP makes the enzyme reduce CDP and UDP, dGTP favors ADP reduction and dTTP favors GDP reduction. Stimulated by ATP and inhibited by dATP binding to the activity site. In terms of biological role, provides the precursors necessary for DNA synthesis. Catalyzes the biosynthesis of deoxyribonucleotides from the corresponding ribonucleotides. The sequence is that of Ribonucleoside-diphosphate reductase large chain from Encephalitozoon cuniculi (strain GB-M1) (Microsporidian parasite).